A 120-amino-acid polypeptide reads, in one-letter code: NAD(P)H-quinone oxidoreductase subunit 3, chloroplastic (120 aa).

Transmembrane regions (helical) follow at residues 9-29 (IFWA…FISG), 64-84 (MFAL…PWAM), and 88-108 (VLGV…IVGL).

It belongs to the complex I subunit 3 family. In terms of assembly, NDH is composed of at least 16 different subunits, 5 of which are encoded in the nucleus.

It is found in the plastid. It localises to the chloroplast thylakoid membrane. It carries out the reaction a plastoquinone + NADH + (n+1) H(+)(in) = a plastoquinol + NAD(+) + n H(+)(out). The enzyme catalyses a plastoquinone + NADPH + (n+1) H(+)(in) = a plastoquinol + NADP(+) + n H(+)(out). Functionally, NDH shuttles electrons from NAD(P)H:plastoquinone, via FMN and iron-sulfur (Fe-S) centers, to quinones in the photosynthetic chain and possibly in a chloroplast respiratory chain. The immediate electron acceptor for the enzyme in this species is believed to be plastoquinone. Couples the redox reaction to proton translocation, and thus conserves the redox energy in a proton gradient. In Guizotia abyssinica (Niger), this protein is NAD(P)H-quinone oxidoreductase subunit 3, chloroplastic.